The following is a 453-amino-acid chain: tRNA (guanine-N(7)-)-methyltransferase non-catalytic subunit TRM82 (453 aa).

The segment at 69-99 (ENEEKGIKKSKTNEGNTIEKKHDAKIPVPGP) is disordered. WD repeat units follow at residues 103 to 143 (PIYS…NDNC) and 244 to 286 (GHKE…DEFD).

This sequence belongs to the WD repeat TRM82 family. As to quaternary structure, forms a heterodimer with the catalytic subunit TRM8.

It localises to the nucleus. It participates in tRNA modification; N(7)-methylguanine-tRNA biosynthesis. Its function is as follows. Required for the formation of N(7)-methylguanine at position 46 (m7G46) in tRNA. In the complex, it is required to stabilize and induce conformational changes of the catalytic subunit. This Vanderwaltozyma polyspora (strain ATCC 22028 / DSM 70294 / BCRC 21397 / CBS 2163 / NBRC 10782 / NRRL Y-8283 / UCD 57-17) (Kluyveromyces polysporus) protein is tRNA (guanine-N(7)-)-methyltransferase non-catalytic subunit TRM82.